Consider the following 37-residue polypeptide: Conotoxin Bt1.8 (37 aa).

Residues P1 to K20 constitute a propeptide that is removed on maturation. 2 disulfides stabilise this stretch: C22/C28 and C23/C36. At C36 the chain carries Cysteine amide.

This sequence belongs to the conotoxin A superfamily. Expressed by the venom duct.

Its subcellular location is the secreted. Functionally, alpha-conotoxins bind to the nicotinic acetylcholine receptors (nAChR) and inhibit them. This toxin inhibits mammalian alpha-3-beta-2/CHRNA3-CHRNB2 nAChR (IC(50)=9.4 nM (rat), IC(50)=8.8 nM (human)), as well as the subunit chimera alpha-6/alpha-3-beta-2-beta-3 nAChR (CHRNA6/CHRNA3-CHRNB2-CHRNB3)(IC(50)=2.1 nM (rat), IC(50)=1.7 nM (human)). Binds to rat alpha-6/alpha-3-beta-2-beta-3 more rapidly than to alpha-3-beta-2, and dissociates more rapidly from alpha-3-beta-2 than from alpha-6/alpha-3-beta-2-beta-3. The protein is Conotoxin Bt1.8 of Conus betulinus (Beech cone).